A 449-amino-acid chain; its full sequence is Tripartite motif-containing protein 64 (449 aa).

An RING-type zinc finger spans residues 15-56 (CCICVNYFIDPVTIDCGHSFCRPCLCLCSEEGRAPMRCPSCR). The B box-type zinc finger occupies 87 to 128 (SSDNICVLHEETKELFCEADKRLLCGPCSESPEHMAHSHSPI). Residues cysteine 92, histidine 95, cysteine 114, and histidine 120 each contribute to the Zn(2+) site. Positions 189 to 225 (LDEEEQRHLQALEREAEELFQQLQDSQVRMTQHLERM) form a coiled coil. The B30.2/SPRY domain maps to 269 to 449 (LTSWCITGVL…LRPFFCFGCT (181 aa)).

It belongs to the TRIM/RBCC family.

The chain is Tripartite motif-containing protein 64 (TRIM64) from Homo sapiens (Human).